The chain runs to 284 residues: 16S rRNA (guanine(1405)-N(7))-methyltransferase (284 aa).

Residues Y73, 111–113 (HAS), R117, A142, D165, 191–192 (DL), L208, and Q217 contribute to the S-adenosyl-L-methionine site.

This sequence belongs to the methyltransferase superfamily. Aminoglycoside resistance family.

It carries out the reaction guanosine(1405) in 16S rRNA + S-adenosyl-L-methionine = N(7)-methylguanosine(1405) in 16S rRNA + S-adenosyl-L-homocysteine. Its function is as follows. Specifically methylates the N(7) position of guanine 1405 in 16S rRNA. Confers resistance to various aminoglycosides, including gentamicin and kanamycin. The chain is 16S rRNA (guanine(1405)-N(7))-methyltransferase (Krm) from Frankia casuarinae (strain DSM 45818 / CECT 9043 / HFP020203 / CcI3).